Reading from the N-terminus, the 191-residue chain is Leucyl/phenylalanyl-tRNA--protein transferase (191 aa).

This sequence belongs to the L/F-transferase family.

It localises to the cytoplasm. The enzyme catalyses N-terminal L-lysyl-[protein] + L-leucyl-tRNA(Leu) = N-terminal L-leucyl-L-lysyl-[protein] + tRNA(Leu) + H(+). It catalyses the reaction N-terminal L-arginyl-[protein] + L-leucyl-tRNA(Leu) = N-terminal L-leucyl-L-arginyl-[protein] + tRNA(Leu) + H(+). It carries out the reaction L-phenylalanyl-tRNA(Phe) + an N-terminal L-alpha-aminoacyl-[protein] = an N-terminal L-phenylalanyl-L-alpha-aminoacyl-[protein] + tRNA(Phe). Functions in the N-end rule pathway of protein degradation where it conjugates Leu, Phe and, less efficiently, Met from aminoacyl-tRNAs to the N-termini of proteins containing an N-terminal arginine or lysine. This is Leucyl/phenylalanyl-tRNA--protein transferase from Rubrobacter xylanophilus (strain DSM 9941 / JCM 11954 / NBRC 16129 / PRD-1).